The following is a 153-amino-acid chain: SKP1-like protein 9 (153 aa).

The interval 95–153 (IKAANYLNIKSLFDLACQTVAEIIKGNTPEQIREFFNIENDLTPEEEAAIRRENKWAFE) is interaction with the F-box domain of F-box proteins.

The protein belongs to the SKP1 family. Part of a SCF (SKP1-cullin-F-box) protein ligase complex. Interacts with CPR1/CPR30 and At3g61590. Expressed in leaves, shoot apical meristem (SAM), roots, flowers and pollen.

It localises to the nucleus. The protein operates within protein modification; protein ubiquitination. In terms of biological role, involved in ubiquitination and subsequent proteasomal degradation of target proteins. Together with CUL1, RBX1 and a F-box protein, it forms a SCF E3 ubiquitin ligase complex. The functional specificity of this complex depends on the type of F-box protein. In the SCF complex, it serves as an adapter that links the F-box protein to CUL1. The sequence is that of SKP1-like protein 9 (ASK9) from Arabidopsis thaliana (Mouse-ear cress).